The following is a 251-amino-acid chain: Putative fatty acid elongase DDB_G0274669 (251 aa).

Helical transmembrane passes span 51-71, 82-102, 135-155, 177-197, and 211-231; these read FQIIPIVLVIYLVTIFSIKFL, FISILHNAILCIWSLIMCVGV, WSYIFYISKFYELLDTVIIVL, YITMIQILQFVCLGIAGVLHV, and AFAAAYSINFSFLFLFSKFFV.

This sequence belongs to the ELO family.

The protein localises to the membrane. The catalysed reaction is a very-long-chain acyl-CoA + malonyl-CoA + H(+) = a very-long-chain 3-oxoacyl-CoA + CO2 + CoA. Could be implicated in synthesis of very long chain fatty acids. The protein is Putative fatty acid elongase DDB_G0274669 of Dictyostelium discoideum (Social amoeba).